Reading from the N-terminus, the 536-residue chain is UDP-N-acetylmuramate--L-alanine ligase (536 aa).

133–139 (GSSGKTT) contributes to the ATP binding site.

This sequence belongs to the MurCDEF family.

Its subcellular location is the cytoplasm. The catalysed reaction is UDP-N-acetyl-alpha-D-muramate + L-alanine + ATP = UDP-N-acetyl-alpha-D-muramoyl-L-alanine + ADP + phosphate + H(+). It functions in the pathway cell wall biogenesis; peptidoglycan biosynthesis. In terms of biological role, cell wall formation. The chain is UDP-N-acetylmuramate--L-alanine ligase from Wolbachia sp. subsp. Brugia malayi (strain TRS).